A 662-amino-acid polypeptide reads, in one-letter code: Protein-arginine deiminase type-1 (662 aa).

Ca(2+) is bound by residues asparagine 153, aspartate 155, aspartate 157, aspartate 164, aspartate 175, aspartate 178, glutamine 350, glutamate 352, lysine 363, aspartate 370, serine 371, asparagine 374, phenylalanine 408, and leucine 411. Cysteine 644 functions as the Nucleophile in the catalytic mechanism.

This sequence belongs to the protein arginine deiminase family. As to quaternary structure, monomer. Ca(2+) is required as a cofactor. In terms of tissue distribution, expressed only in the epidermis and uterus.

The protein resides in the cytoplasm. It carries out the reaction L-arginyl-[protein] + H2O = L-citrullyl-[protein] + NH4(+). Its function is as follows. Catalyzes the deimination of arginine residues of proteins. The sequence is that of Protein-arginine deiminase type-1 (Padi1) from Mus musculus (Mouse).